The following is a 417-amino-acid chain: MRYLWLFLIGTIGLFATDKTLDIIKTIQKLPKIEVRYSTDNDANYALKLHEVLANDLKTSQHFDVSQNKDQGAINYTELKDKKVHLVALVSVAVENGNKISRLKLYDVNTSTLVKTFDYPILSADLYPFAAHNMAIVVNDYLKAPSIAWMKRLIVFSKYIGPGITNIALADYTMRYQKEIIKNNRLNIFPKWANAEQTEFYYTQYGERTPMILKYNIQKATHENIASSQGMAVVSSVSSDGSKILMSLAPDGQPDVYLYDTHKKTKTKITRYPGIDVSGVFLEDDKSMAFVSDRSGYPNIYMKKLGLKESAEQLLYEGRSNESIDAYKDSIVYVSRENLNEFGKTVFNLNLITLNSKYIRRLTVNGSNQMPRFSTDGRNIMYIKKTPQEYAMGLILLDYNQSFLFPLKNVKIQAFDW.

Positions 1–16 are cleaved as a signal peptide; the sequence is MRYLWLFLIGTIGLFA.

It belongs to the TolB family. In terms of assembly, the Tol-Pal system is composed of five core proteins: the inner membrane proteins TolA, TolQ and TolR, the periplasmic protein TolB and the outer membrane protein Pal. They form a network linking the inner and outer membranes and the peptidoglycan layer.

The protein resides in the periplasm. In terms of biological role, part of the Tol-Pal system, which plays a role in outer membrane invagination during cell division and is important for maintaining outer membrane integrity. The polypeptide is Tol-Pal system protein TolB (Helicobacter pylori (strain HPAG1)).